Consider the following 109-residue polypeptide: Large ribosomal subunit protein uL24 (109 aa).

It belongs to the universal ribosomal protein uL24 family. As to quaternary structure, part of the 50S ribosomal subunit.

One of two assembly initiator proteins, it binds directly to the 5'-end of the 23S rRNA, where it nucleates assembly of the 50S subunit. Functionally, one of the proteins that surrounds the polypeptide exit tunnel on the outside of the subunit. This Legionella pneumophila (strain Corby) protein is Large ribosomal subunit protein uL24.